A 47-amino-acid chain; its full sequence is Zinc-finger protein TK0143 (47 aa).

A C2H2-type zinc finger spans residues 18–41; it reads FRCPRCGMVFRSAKAYTRHVNKAH. Residues C20, C23, H36, and H41 each coordinate Zn(2+).

As to quaternary structure, crystallized in association with 70S ribosomes. The cofactor is Zn(2+).

The chain is Zinc-finger protein TK0143 from Thermococcus kodakarensis (strain ATCC BAA-918 / JCM 12380 / KOD1) (Pyrococcus kodakaraensis (strain KOD1)).